We begin with the raw amino-acid sequence, 152 residues long: Aspartate carbamoyltransferase regulatory chain (152 aa).

The Zn(2+) site is built by cysteine 107, cysteine 112, cysteine 136, and cysteine 139.

Belongs to the PyrI family. As to quaternary structure, contains catalytic and regulatory chains. The cofactor is Zn(2+).

Its function is as follows. Involved in allosteric regulation of aspartate carbamoyltransferase. This chain is Aspartate carbamoyltransferase regulatory chain, found in Chromobacterium violaceum (strain ATCC 12472 / DSM 30191 / JCM 1249 / CCUG 213 / NBRC 12614 / NCIMB 9131 / NCTC 9757 / MK).